A 124-amino-acid chain; its full sequence is Mitochondrial import inner membrane translocase subunit TIM16 (124 aa).

Residues 58 to 109 (EAQQILNISKLSPEEVQNYEHLFKVNDKSVGDSFYLQSKVVRAKERLDEELQ) form a J-like region. Ser69 carries the post-translational modification Phosphoserine.

The protein belongs to the TIM16/PAM16 family. In terms of assembly, probable component of the PAM complex at least composed of a mitochondrial HSP70 protein, GRPEL1 or GRPEL2, TIMM44, TIMM16/PAM16 and TIMM14/DNAJC19. Interacts with DNAJC19. Directly interacts with DNAJC15; this interaction counteracts DNAJC15-dependent stimulation of HSPA9 ATPase activity. Associates with the TIM23 complex.

Its subcellular location is the mitochondrion inner membrane. In terms of biological role, regulates ATP-dependent protein translocation into the mitochondrial matrix. Inhibits DNAJC19 stimulation of HSPA9/Mortalin ATPase activity. This is Mitochondrial import inner membrane translocase subunit TIM16 (Magmas-ps1) from Rattus norvegicus (Rat).